A 493-amino-acid chain; its full sequence is Acetylcholine receptor subunit beta-type unc-29 (493 aa).

An N-terminal signal peptide occupies residues 1 to 26 (MRTNRLSWILVLSVVIFLVIINTINA). Asn25 and Asn50 each carry an N-linked (GlcNAc...) asparagine glycan. At 27 to 232 (SDDEERLMVD…QVRIRRKTLF (206 aa)) the chain is on the extracellular side. Cys155 and Cys169 are disulfide-bonded. 3 consecutive transmembrane segments (helical) span residues 233 to 254 (YTVV…VFFL), 262 to 280 (ITLT…LLVS), and 296 to 317 (YLLL…IINV). Residues 318 to 445 (YFRGPRTHRM…WKYVAMIIDR (128 aa)) are Cytoplasmic-facing. The chain crosses the membrane as a helical span at residues 446-466 (LLLYVFFGITVGGTCGILFSA).

It belongs to the ligand-gated ion channel (TC 1.A.9) family. Acetylcholine receptor (TC 1.A.9.1) subfamily. As to quaternary structure, interacts with lev-1. Component of nicotinic acetylcholine receptor composed of 2 non-alpha subunits lev-1 and unc-29, and 3 alpha subunits unc-38, unc-63 and lev-8. Interacts with oig-4. Interacts with crld-1.

The protein localises to the postsynaptic cell membrane. It is found in the cell membrane. In terms of biological role, non-alpha subunit of nicotinic acetylcholine receptor (nAChR). Involved in nAChR sensitivity to nicotine and levasimole. The polypeptide is Acetylcholine receptor subunit beta-type unc-29 (Caenorhabditis elegans).